Here is a 161-residue protein sequence, read N- to C-terminus: Transcriptional regulator MraZ (161 aa).

SpoVT-AbrB domains are found at residues 7–69 (KELH…EPDV) and 98–141 (LDVV…EPER).

It belongs to the MraZ family. As to quaternary structure, forms oligomers.

The protein resides in the cytoplasm. Its subcellular location is the nucleoid. The chain is Transcriptional regulator MraZ from Chlorobium limicola (strain DSM 245 / NBRC 103803 / 6330).